The following is a 192-amino-acid chain: uncharacterized protein (192 aa).

Residues 17-73 are disordered; it reads MLRGSGKKPIQRLAKAPAATASSKTSEWRATTAYGFLPAGGDVRPHSPRYESQGVLS. Low complexity predominate over residues 30–41; that stretch reads AKAPAATASSKT.

This is an uncharacterized protein from Sinorhizobium fredii (strain NBRC 101917 / NGR234).